Consider the following 491-residue polypeptide: Trigger factor (491 aa).

Positions 169–254 constitute a PPIase FKBP-type domain; that stretch reads GDRVTIDYLG…VKDVAAAAPI (86 aa). Residues 433–491 form a disordered region; sequence KTVSKDELMAEDEAEDKPAKKAPAKKKAAAKAEAGEGEEAAAPKKKAPAKKKAADDSAE. A compositionally biased stretch (basic residues) spans 452 to 461; it reads KKAPAKKKAA.

The protein belongs to the FKBP-type PPIase family. Tig subfamily.

The protein resides in the cytoplasm. It catalyses the reaction [protein]-peptidylproline (omega=180) = [protein]-peptidylproline (omega=0). Involved in protein export. Acts as a chaperone by maintaining the newly synthesized protein in an open conformation. Functions as a peptidyl-prolyl cis-trans isomerase. This is Trigger factor from Sinorhizobium fredii (strain NBRC 101917 / NGR234).